A 122-amino-acid polypeptide reads, in one-letter code: Large ribosomal subunit protein uL14 (122 aa).

It belongs to the universal ribosomal protein uL14 family. Part of the 50S ribosomal subunit. Forms a cluster with proteins L3 and L19. In the 70S ribosome, L14 and L19 interact and together make contacts with the 16S rRNA in bridges B5 and B8.

Functionally, binds to 23S rRNA. Forms part of two intersubunit bridges in the 70S ribosome. The polypeptide is Large ribosomal subunit protein uL14 (Aliarcobacter butzleri (strain RM4018) (Arcobacter butzleri)).